The sequence spans 1022 residues: Collagen alpha-2(VI) chain (1022 aa).

The N-terminal stretch at 1 to 27 (MSRRTAEMFQQAFLSTLLCVALVPLHA) is a signal peptide. Residues 28 to 255 (QFDDEPVTSC…CYKMTCLEIA (228 aa)) form a nonhelical region region. Residues 44 to 168 (PISVYFVIDT…VITDGHVTGS (125 aa)) enclose the VWFA 1 domain. N-linked (GlcNAc...) asparagine glycosylation is found at Asn-141 and Asn-215. The tract at residues 256-590 (GPAGPKGYRG…PGPPGDPGLT (335 aa)) is triple-helical region. Residues 263–587 (YRGQKGAKGN…EGTPGPPGDP (325 aa)) are disordered. Low complexity predominate over residues 287 to 299 (DPGIEGPIGYPGP). Over residues 306-318 (KGEKGEIGSDGRR) the composition is skewed to basic and acidic residues. N-linked (GlcNAc...) asparagine glycosylation is present at Asn-327. 2 consecutive short sequence motifs (cell attachment site) follow at residues 348–350 (RGD) and 366–368 (RGD). A compositionally biased stretch (basic and acidic residues) spans 363 to 377 (QGERGDEGMKGDPGR). Residues 389–399 (EKGSPGIPGNP) show a composition bias toward low complexity. Short sequence motifs (cell attachment site) lie at residues 426-428 (RGD), 444-446 (RGD), 465-467 (RGD), 489-491 (RGD), and 498-500 (RGD). Residues 514 to 519 (GFSYPG) form an interruption in collagenous region region. Positions 534–543 (GPKGGRGELG) are enriched in gly residues. Residues 591–1022 (DCDVMTYVRE…FFDRFIRWIC (432 aa)) are nonhelical region. VWFA domains follow at residues 613–738 (ALDI…YDPR) and 833–957 (DIVF…ITGS). 2 N-linked (GlcNAc...) asparagine glycosylation sites follow: Asn-630 and Asn-897.

Belongs to the type VI collagen family. Trimers composed of three different chains: alpha 1(VI), alpha 2(VI), and alpha 3(VI). Post-translationally, prolines at the third position of the tripeptide repeating unit (G-X-Y) are hydroxylated in some or all of the chains.

It is found in the secreted. The protein localises to the extracellular space. Its subcellular location is the extracellular matrix. Its function is as follows. Collagen VI acts as a cell-binding protein. The sequence is that of Collagen alpha-2(VI) chain (COL6A2) from Gallus gallus (Chicken).